The primary structure comprises 878 residues: AP-5 complex subunit beta-1 (878 aa).

Positions 234–260 (RLQPQAPSWPAAEEGEGERSLTAREHS) are disordered. Residues 250 to 260 (GERSLTAREHS) are compositionally biased toward basic and acidic residues.

In terms of assembly, probably part of the adaptor protein complex 5 (AP-5), a tetramer composed of AP5B1, AP5M1, AP5S1 and AP5Z1. Interacts with ZFYVE26 and SPG11.

Functionally, as part of AP-5, a probable fifth adaptor protein complex it may be involved in endosomal transport. The sequence is that of AP-5 complex subunit beta-1 (AP5B1) from Homo sapiens (Human).